Here is a 178-residue protein sequence, read N- to C-terminus: ATP-dependent protease subunit HslV (178 aa).

Thr-7 is a catalytic residue. The Na(+) site is built by Gly-162, Cys-165, and Thr-168.

This sequence belongs to the peptidase T1B family. HslV subfamily. In terms of assembly, a double ring-shaped homohexamer of HslV is capped on each side by a ring-shaped HslU homohexamer. The assembly of the HslU/HslV complex is dependent on binding of ATP.

The protein localises to the cytoplasm. The enzyme catalyses ATP-dependent cleavage of peptide bonds with broad specificity.. Allosterically activated by HslU binding. Its function is as follows. Protease subunit of a proteasome-like degradation complex believed to be a general protein degrading machinery. The chain is ATP-dependent protease subunit HslV from Burkholderia ambifaria (strain MC40-6).